The chain runs to 555 residues: Alpha-copaene synthase (555 aa).

Mg(2+) is bound by residues Asp312, Asp316, Asp452, Ser456, and Glu460. Residues 312–316 carry the DDXXD motif motif; sequence DDTYD.

Belongs to the terpene synthase family. Requires Mg(2+) as cofactor. Mainly expressed in sunflower trichomes.

The enzyme catalyses (2E,6E)-farnesyl diphosphate = alpha-copaene + diphosphate. It catalyses the reaction (2E,6E)-farnesyl diphosphate = alpha-muurolene + diphosphate. The catalysed reaction is (2E,6E)-farnesyl diphosphate = alpha-humulene + diphosphate. Its pathway is secondary metabolite biosynthesis; terpenoid biosynthesis. In terms of biological role, involved in the biosynthesis of germacrene-derived sesquiterpene lactones. Catalyzes the cyclization of farnesyl diphosphate to alpha-copaene, delta-cadinene, alpha-muurolene, beta-caryophyllene and alpha-humulene. This is Alpha-copaene synthase (CS) from Helianthus annuus (Common sunflower).